The following is a 548-amino-acid chain: Chaperonin GroEL (548 aa).

ATP is bound by residues 30–33 (TLGP), K51, 87–91 (DGTTT), G415, 479–481 (NAA), and D495.

It belongs to the chaperonin (HSP60) family. In terms of assembly, forms a cylinder of 14 subunits composed of two heptameric rings stacked back-to-back. Interacts with the co-chaperonin GroES.

The protein resides in the cytoplasm. It catalyses the reaction ATP + H2O + a folded polypeptide = ADP + phosphate + an unfolded polypeptide.. In terms of biological role, together with its co-chaperonin GroES, plays an essential role in assisting protein folding. The GroEL-GroES system forms a nano-cage that allows encapsulation of the non-native substrate proteins and provides a physical environment optimized to promote and accelerate protein folding. This Sodalis glossinidius (strain morsitans) protein is Chaperonin GroEL.